The following is a 366-amino-acid chain: Trans-enoyl reductase caaB (366 aa).

In terms of domain architecture, Enoyl reductase (ER) spans Gly19–Val363. An NADP(+)-binding site is contributed by Tyr219.

It belongs to the zinc-containing alcohol dehydrogenase family. Monomer.

Its pathway is secondary metabolite biosynthesis. Its function is as follows. Trans-enoyl reductase; part of the gene cluster that produces the acyltetronic acid derivatives carlosic acid, agglomerin F and carlosic acid methyl ether. The PKS domains of caaA condenses two malonyl-CoAs into an acetyl starter unit, and form 1,3-diketohexanyl-ACP with the help of the trans-enoyl reductase caaB. Next, the C domain of caaA forms the ester bond between the acyl chain and L-malic acid (derived from the TCA cycle) and accepted by the A domain instead of an amino acid. Finally, the terminal reductase/Dieckmann cyclization (R/DKC) domain cyclizes the intermediate and releases the product as carlosic acid. Decarboxylation of carlosic acid followed by formation of the exocyclic double bond is likely to be catalyzed by the cytochrome P450 monooxygenase caaC. Thus, decarboxylation and oxidation would be coupled (performed by one enzyme) through concomitant abstraction of the hydrogen at C-4. Finally, sequential oxidations of the terminal C-10 methyl group to form carboxylic acid would be catalyzed by the 2-oxoglutarate-dependent dioxygenase caaD, which is required for the biosynthesis of agglomerin F. This Aspergillus niger (strain ATCC MYA-4892 / CBS 513.88 / FGSC A1513) protein is Trans-enoyl reductase caaB.